Reading from the N-terminus, the 343-residue chain is Protein RecA (343 aa).

Position 64-71 (Gly64–Thr71) interacts with ATP.

Belongs to the RecA family.

Its subcellular location is the cytoplasm. Can catalyze the hydrolysis of ATP in the presence of single-stranded DNA, the ATP-dependent uptake of single-stranded DNA by duplex DNA, and the ATP-dependent hybridization of homologous single-stranded DNAs. It interacts with LexA causing its activation and leading to its autocatalytic cleavage. This chain is Protein RecA, found in Bacillus mycoides (strain KBAB4) (Bacillus weihenstephanensis).